Here is a 344-residue protein sequence, read N- to C-terminus: Phosphate acyltransferase (344 aa).

Belongs to the PlsX family. Homodimer. Probably interacts with PlsY.

The protein localises to the cytoplasm. The catalysed reaction is a fatty acyl-[ACP] + phosphate = an acyl phosphate + holo-[ACP]. It participates in lipid metabolism; phospholipid metabolism. Its function is as follows. Catalyzes the reversible formation of acyl-phosphate (acyl-PO(4)) from acyl-[acyl-carrier-protein] (acyl-ACP). This enzyme utilizes acyl-ACP as fatty acyl donor, but not acyl-CoA. The protein is Phosphate acyltransferase of Enterobacter sp. (strain 638).